The following is a 156-amino-acid chain: 6,7-dimethyl-8-ribityllumazine synthase (156 aa).

5-amino-6-(D-ribitylamino)uracil contacts are provided by residues Phe-22, 56–58, and 80–82; these read AME and AVI. 85 to 86 contributes to the (2S)-2-hydroxy-3-oxobutyl phosphate binding site; it reads ET. The Proton donor role is filled by His-88. Residue Phe-113 coordinates 5-amino-6-(D-ribitylamino)uracil. (2S)-2-hydroxy-3-oxobutyl phosphate is bound at residue Arg-127.

It belongs to the DMRL synthase family.

It carries out the reaction (2S)-2-hydroxy-3-oxobutyl phosphate + 5-amino-6-(D-ribitylamino)uracil = 6,7-dimethyl-8-(1-D-ribityl)lumazine + phosphate + 2 H2O + H(+). Its pathway is cofactor biosynthesis; riboflavin biosynthesis; riboflavin from 2-hydroxy-3-oxobutyl phosphate and 5-amino-6-(D-ribitylamino)uracil: step 1/2. Functionally, catalyzes the formation of 6,7-dimethyl-8-ribityllumazine by condensation of 5-amino-6-(D-ribitylamino)uracil with 3,4-dihydroxy-2-butanone 4-phosphate. This is the penultimate step in the biosynthesis of riboflavin. This chain is 6,7-dimethyl-8-ribityllumazine synthase, found in Kosmotoga olearia (strain ATCC BAA-1733 / DSM 21960 / TBF 19.5.1).